The chain runs to 370 residues: MDPSETAALHHCSADSSPADEARVPQSTELIPRRPVSRSPTCARCRNHGVTAHLKGHKRLCLFQACECHKCVLILERRRVMAAQVALRRQQEAQLKRHLAQGLMKGATPLKAPLRVKKGAIRPGIPSGKENIAPQPQSPHGAVPLVLTPPGKENYGPLLLSRPPEALPLPWTPVPPGPWGPGHWLPPGLSMPPPVVCRLLCQEPAVPLHPFPGFDPGTSLRLPTHGTLPTCPGSRSVLTAPLSGEPQGPPNLPHTCSTLILQSCGTPDSLLLQPQAPGASCLAWTSGPSERQLQREAAEALVGLKDSSQAPRLTPSVPPNPAWISLLHPCGPPAPPGGRGFQPVGPPLRPSPGSSVSLHIGRLGSISLLS.

Positions 1-38 are disordered; sequence MDPSETAALHHCSADSSPADEARVPQSTELIPRRPVSR. Positions 42–89 form a DNA-binding region, DM; the sequence is CARCRNHGVTAHLKGHKRLCLFQACECHKCVLILERRRVMAAQVALRR. The disordered stretch occupies residues 334–356; the sequence is APPGGRGFQPVGPPLRPSPGSSV.

Belongs to the DMRT family. In terms of tissue distribution, expressed in testis. Highly expressed in ovary.

The protein resides in the nucleus. Its function is as follows. May be involved in sexual development. This Mus musculus (Mouse) protein is Doublesex- and mab-3-related transcription factor C2 (Dmrtc2).